The primary structure comprises 129 residues: MKEDRRSAPLFPIGIVMDLTQLSARQIRYYEEHNLVSPTRTKGNRRLFSFNDVDKLLEIKDLLDQGLNMAGIKQVLLMKENQTEAVKVKEETKEISKTELRKILRDELQHTGRFNRTSLRQGDISRFFH.

In terms of domain architecture, HTH merR-type spans 10-78 (LFPIGIVMDL…MAGIKQVLLM (69 aa)). The segment at residues 13 to 32 (IGIVMDLTQLSARQIRYYEE) is a DNA-binding region (H-T-H motif).

Homodimer under conditions of nitrogen excess. Monomer under conditions of nitrogen-limited. Interacts with feedback-inhibited GlnA in order to stabilizes GlnR-DNA complex.

With respect to regulation, under conditions of nitrogen excess, the DNA binding activity of GlnR is activated by a transient interaction with feedback-inhibited GlnA. Under conditions of nitrogen-limited, GlnR is autoinhibited by its C-terminal region. Transcription repressor during nitrogen excess. On the contrary of the MerR members, which require longer DNA sites for high-affinity binding, GlnR requires a DNA sequence of 17 nucleotides as minimal binding site. This chain is HTH-type transcriptional regulator GlnR, found in Bacillus anthracis.